The chain runs to 320 residues: Putative GDP-polyphosphate phosphotransferase PKK2A (320 aa).

3 disordered regions span residues Met1–Asp21, Arg246–Asp267, and Glu281–Lys320. The span at Asp12–Asp21 shows a compositional bias: basic and acidic residues. A compositionally biased stretch (basic and acidic residues) spans Glu281–Ala290.

It belongs to the polyphosphate kinase 2 (PPK2) family. Class I subfamily.

The catalysed reaction is [phosphate](n) + GTP = [phosphate](n+1) + GDP. The polypeptide is Putative GDP-polyphosphate phosphotransferase PKK2A (Corynebacterium glutamicum (strain ATCC 13032 / DSM 20300 / JCM 1318 / BCRC 11384 / CCUG 27702 / LMG 3730 / NBRC 12168 / NCIMB 10025 / NRRL B-2784 / 534)).